The following is a 118-amino-acid chain: Ribonuclease P protein component (118 aa).

The protein belongs to the RnpA family. As to quaternary structure, consists of a catalytic RNA component (M1 or rnpB) and a protein subunit.

It catalyses the reaction Endonucleolytic cleavage of RNA, removing 5'-extranucleotides from tRNA precursor.. In terms of biological role, RNaseP catalyzes the removal of the 5'-leader sequence from pre-tRNA to produce the mature 5'-terminus. It can also cleave other RNA substrates such as 4.5S RNA. The protein component plays an auxiliary but essential role in vivo by binding to the 5'-leader sequence and broadening the substrate specificity of the ribozyme. The chain is Ribonuclease P protein component from Enterococcus faecalis (strain ATCC 700802 / V583).